Consider the following 368-residue polypeptide: 3-dehydroquinate synthase (368 aa).

NAD(+) is bound by residues Asp-69–Lys-74, Gly-103–Asp-107, Thr-127–Thr-128, Lys-140, and Lys-149. 3 residues coordinate Zn(2+): Glu-182, His-245, and His-262.

The protein belongs to the sugar phosphate cyclases superfamily. Dehydroquinate synthase family. The cofactor is Co(2+). Requires Zn(2+) as cofactor. It depends on NAD(+) as a cofactor.

Its subcellular location is the cytoplasm. It carries out the reaction 7-phospho-2-dehydro-3-deoxy-D-arabino-heptonate = 3-dehydroquinate + phosphate. It participates in metabolic intermediate biosynthesis; chorismate biosynthesis; chorismate from D-erythrose 4-phosphate and phosphoenolpyruvate: step 2/7. Its function is as follows. Catalyzes the conversion of 3-deoxy-D-arabino-heptulosonate 7-phosphate (DAHP) to dehydroquinate (DHQ). This chain is 3-dehydroquinate synthase, found in Pseudomonas aeruginosa (strain LESB58).